A 408-amino-acid chain; its full sequence is Multidrug resistance protein MdtG (408 aa).

Helical transmembrane passes span 13-33, 51-71, 89-109, 112-132, 138-158, 170-190, 221-241, 253-273, 287-307, and 375-395; these read LYIA…VMPF, LWSG…SPFW, LGMA…QFLL, AALG…AIQV, GWAL…GPLL, PVFF…FFFI, LFVT…ILTL, LAFI…LSAP, ILVA…FVQS, and AVFL…WLSL.

Belongs to the major facilitator superfamily. DHA1 family. MdtG (TC 2.A.1.2.20) subfamily.

It is found in the cell inner membrane. This chain is Multidrug resistance protein MdtG, found in Dickeya zeae (strain Ech586) (Dickeya dadantii (strain Ech586)).